Consider the following 403-residue polypeptide: Large ribosomal subunit protein uL3 (403 aa).

The interval 1 to 38 (MSHRKFSAPRHGSLGFLPRKRSSRHRGKVKSFPKDDSS) is disordered. S13 bears the Phosphoserine mark. Residues 18 to 31 (PRKRSSRHRGKVKS) show a composition bias toward basic residues. K39 is covalently cross-linked (Glycyl lysine isopeptide (Lys-Gly) (interchain with G-Cter in SUMO2)). K136 carries the post-translational modification N6-acetyllysine. Glycyl lysine isopeptide (Lys-Gly) (interchain with G-Cter in SUMO2) cross-links involve residues K224 and K226. H245 carries the post-translational modification Tele-methylhistidine. K286 and K294 each carry N6-acetyllysine; alternate. K286 is covalently cross-linked (Glycyl lysine isopeptide (Lys-Gly) (interchain with G-Cter in SUMO2); alternate). K294 participates in a covalent cross-link: Glycyl lysine isopeptide (Lys-Gly) (interchain with G-Cter in SUMO1); alternate. S304 is subject to Phosphoserine. K366 is modified (N6-acetyllysine; alternate). K366 is covalently cross-linked (Glycyl lysine isopeptide (Lys-Gly) (interchain with G-Cter in SUMO2); alternate). K373 carries the post-translational modification N6-acetyllysine. Residues K386, K393, and K399 each participate in a glycyl lysine isopeptide (Lys-Gly) (interchain with G-Cter in SUMO2) cross-link.

This sequence belongs to the universal ribosomal protein uL3 family. As to quaternary structure, component of the large ribosomal subunit. Interacts with DHX33. In terms of processing, constitutively monomethylated at His-245 by METTL18. Methylation at His-245 regulates translation elongation by slowing ribosome traversal on tyrosine codons: slower elongation provides enough time for proper folding of synthesized proteins and prevents cellular aggregation of tyrosine-rich proteins It is not required for incorporation of RPL3 into ribosomes.

Its subcellular location is the nucleus. The protein resides in the nucleolus. It localises to the cytoplasm. Its function is as follows. Component of the large ribosomal subunit. The ribosome is a large ribonucleoprotein complex responsible for the synthesis of proteins in the cell. In Sus scrofa (Pig), this protein is Large ribosomal subunit protein uL3 (RPL3).